The sequence spans 265 residues: Urease accessory protein UreH (265 aa).

The protein belongs to the UreD family. In terms of assembly, ureH, UreF and UreG form a complex that acts as a GTP-hydrolysis-dependent molecular chaperone, activating the urease apoprotein by helping to assemble the nickel containing metallocenter of UreC. The UreE protein probably delivers the nickel.

The protein resides in the cytoplasm. Required for maturation of urease via the functional incorporation of the urease nickel metallocenter. The sequence is that of Urease accessory protein UreH from Helicobacter pylori (strain HPAG1).